Here is a 95-residue protein sequence, read N- to C-terminus: uncharacterized protein (95 aa).

This is an uncharacterized protein from Bacillus anthracis.